The following is a 63-amino-acid chain: Large ribosomal subunit protein uL29 (63 aa).

It belongs to the universal ribosomal protein uL29 family.

In Baumannia cicadellinicola subsp. Homalodisca coagulata, this protein is Large ribosomal subunit protein uL29.